Reading from the N-terminus, the 260-residue chain is 3'-5' ssDNA/RNA exonuclease TatD (260 aa).

A divalent metal cation is bound by residues E91, H127, and H152.

The protein belongs to the metallo-dependent hydrolases superfamily. TatD-type hydrolase family. TatD subfamily. In terms of assembly, monomer. Mg(2+) serves as cofactor. Mn(2+) is required as a cofactor.

It localises to the cytoplasm. In terms of biological role, 3'-5' exonuclease that prefers single-stranded DNA and RNA. May play a role in the H(2)O(2)-induced DNA damage repair. This Escherichia coli (strain K12) protein is 3'-5' ssDNA/RNA exonuclease TatD.